An 85-amino-acid polypeptide reads, in one-letter code: UPF0297 protein LBA0418 (85 aa).

The protein belongs to the UPF0297 family.

This is UPF0297 protein LBA0418 from Lactobacillus acidophilus (strain ATCC 700396 / NCK56 / N2 / NCFM).